The following is a 547-amino-acid chain: Glucose-6-phosphate isomerase (547 aa).

E353 serves as the catalytic Proton donor. Catalysis depends on residues H384 and K512.

Belongs to the GPI family.

The protein resides in the cytoplasm. The catalysed reaction is alpha-D-glucose 6-phosphate = beta-D-fructose 6-phosphate. Its pathway is carbohydrate biosynthesis; gluconeogenesis. The protein operates within carbohydrate degradation; glycolysis; D-glyceraldehyde 3-phosphate and glycerone phosphate from D-glucose: step 2/4. Catalyzes the reversible isomerization of glucose-6-phosphate to fructose-6-phosphate. This Pseudoalteromonas atlantica (strain T6c / ATCC BAA-1087) protein is Glucose-6-phosphate isomerase.